The following is a 44-amino-acid chain: MGNPKKNSKDFVPNHIGTQSKKAGGNKGKQMQDTTGKQPIVDNG.

Residues methionine 1–glycine 44 form a disordered region.

This sequence belongs to the SspN family.

The protein localises to the spore core. In Bacillus cytotoxicus (strain DSM 22905 / CIP 110041 / 391-98 / NVH 391-98), this protein is Small, acid-soluble spore protein N.